A 1201-amino-acid polypeptide reads, in one-letter code: Peroxisomal ATPase PEX6 (1201 aa).

Residues 247–300 form a disordered region; that stretch reads LPSNNNNNNNNNNNNNNNNNNNNNNNNNNNNNNNNKEEEVEEEEVEVEEEEKDN. The segment covering 250–280 has biased composition (low complexity); that stretch reads NNNNNNNNNNNNNNNNNNNNNNNNNNNNNNN. Residues 284–297 are compositionally biased toward acidic residues; sequence EEVEEEEVEVEEEE. Residue 959–966 participates in ATP binding; the sequence is GPPGTGKT.

This sequence belongs to the AAA ATPase family. As to quaternary structure, interacts with PEX1; forming the PEX1-PEX6 AAA ATPase complex, which is composed of a heterohexamer formed by a trimer of PEX1-PEX6 dimers.

The protein localises to the cytoplasm. The protein resides in the cytosol. It localises to the peroxisome membrane. It carries out the reaction ATP + H2O = ADP + phosphate + H(+). In terms of biological role, component of the PEX1-PEX6 AAA ATPase complex, a protein dislocase complex that mediates the ATP-dependent extraction of the PEX5 receptor from peroxisomal membranes, an essential step for PEX5 recycling. Specifically recognizes PEX5 monoubiquitinated at 'Cys-11', and pulls it out of the peroxisome lumen through the PEX2-PEX10-PEX12 retrotranslocation channel. Extraction by the PEX1-PEX6 AAA ATPase complex is accompanied by unfolding of the TPR repeats and release of bound cargo from PEX5. The protein is Peroxisomal ATPase PEX6 (pex6) of Dictyostelium discoideum (Social amoeba).